The chain runs to 430 residues: Adenylosuccinate synthetase (430 aa).

GTP is bound by residues G13 to K19 and G41 to T43. Residue D14 is the Proton acceptor of the active site. Mg(2+) contacts are provided by D14 and G41. Residues D14–K17, N39–H42, T130, R144, Q225, T240, and R304 contribute to the IMP site. The active-site Proton donor is H42. A300–R306 contributes to the substrate binding site. Residues R306, K332 to D334, and S414 to G416 each bind GTP.

It belongs to the adenylosuccinate synthetase family. As to quaternary structure, homodimer. It depends on Mg(2+) as a cofactor.

Its subcellular location is the cytoplasm. It catalyses the reaction IMP + L-aspartate + GTP = N(6)-(1,2-dicarboxyethyl)-AMP + GDP + phosphate + 2 H(+). Its pathway is purine metabolism; AMP biosynthesis via de novo pathway; AMP from IMP: step 1/2. In terms of biological role, plays an important role in the de novo pathway of purine nucleotide biosynthesis. Catalyzes the first committed step in the biosynthesis of AMP from IMP. The protein is Adenylosuccinate synthetase of Pseudomonas paraeruginosa (strain DSM 24068 / PA7) (Pseudomonas aeruginosa (strain PA7)).